The primary structure comprises 363 residues: Probable dual-specificity RNA methyltransferase RlmN (363 aa).

Glu106 acts as the Proton acceptor in catalysis. A Radical SAM core domain is found at 112–345; it reads HEYGNSVCVT…VTIRREQGHD (234 aa). An intrachain disulfide couples Cys119 to Cys350. [4Fe-4S] cluster is bound by residues Cys126, Cys130, and Cys133. S-adenosyl-L-methionine is bound by residues 176–177, Ser208, 231–233, and Asn307; these read GE and SLH. Cys350 (S-methylcysteine intermediate) is an active-site residue.

The protein belongs to the radical SAM superfamily. RlmN family. The cofactor is [4Fe-4S] cluster.

Its subcellular location is the cytoplasm. The enzyme catalyses adenosine(2503) in 23S rRNA + 2 reduced [2Fe-2S]-[ferredoxin] + 2 S-adenosyl-L-methionine = 2-methyladenosine(2503) in 23S rRNA + 5'-deoxyadenosine + L-methionine + 2 oxidized [2Fe-2S]-[ferredoxin] + S-adenosyl-L-homocysteine. It catalyses the reaction adenosine(37) in tRNA + 2 reduced [2Fe-2S]-[ferredoxin] + 2 S-adenosyl-L-methionine = 2-methyladenosine(37) in tRNA + 5'-deoxyadenosine + L-methionine + 2 oxidized [2Fe-2S]-[ferredoxin] + S-adenosyl-L-homocysteine. Functionally, specifically methylates position 2 of adenine 2503 in 23S rRNA and position 2 of adenine 37 in tRNAs. The chain is Probable dual-specificity RNA methyltransferase RlmN from Bacillus velezensis (strain DSM 23117 / BGSC 10A6 / LMG 26770 / FZB42) (Bacillus amyloliquefaciens subsp. plantarum).